The primary structure comprises 56 residues: Large ribosomal subunit protein bL32 (56 aa).

The disordered stretch occupies residues 1 to 26 (MAVQQNKKSRSKRGMRRSHDALSTAQ). Residues 7 to 16 (KKSRSKRGMR) show a composition bias toward basic residues.

The protein belongs to the bacterial ribosomal protein bL32 family.

This chain is Large ribosomal subunit protein bL32, found in Shewanella amazonensis (strain ATCC BAA-1098 / SB2B).